We begin with the raw amino-acid sequence, 367 residues long: uncharacterized protein (367 aa).

The 231-residue stretch at 4–234 (LTFEHVKKSY…PANLFVAGFI (231 aa)) folds into the ABC transporter domain. Position 36-43 (36-43 (GPSGCGKS)) interacts with ATP.

It belongs to the ABC transporter superfamily.

This is an uncharacterized protein from Bacillus subtilis (strain 168).